The primary structure comprises 179 residues: Large ribosomal subunit protein uL5 (179 aa).

This sequence belongs to the universal ribosomal protein uL5 family. Part of the 50S ribosomal subunit; part of the 5S rRNA/L5/L18/L25 subcomplex. Contacts the 5S rRNA and the P site tRNA. Forms a bridge to the 30S subunit in the 70S ribosome.

In terms of biological role, this is one of the proteins that bind and probably mediate the attachment of the 5S RNA into the large ribosomal subunit, where it forms part of the central protuberance. In the 70S ribosome it contacts protein S13 of the 30S subunit (bridge B1b), connecting the 2 subunits; this bridge is implicated in subunit movement. Contacts the P site tRNA; the 5S rRNA and some of its associated proteins might help stabilize positioning of ribosome-bound tRNAs. The sequence is that of Large ribosomal subunit protein uL5 from Thermoanaerobacter sp. (strain X514).